The primary structure comprises 413 residues: Glutaminase (413 aa).

The segment at 23 to 307 is glutaminase; the sequence is GELADYIPEL…LSDDMGLHLM (285 aa). Residues S65, N114, E160, N167, Y191, Y243, and V261 each coordinate substrate. Residues 316-413 form the STAS domain; the sequence is AVRSITRDGD…SDGTICKERV (98 aa).

The protein belongs to the glutaminase family. As to quaternary structure, homotetramer.

The enzyme catalyses L-glutamine + H2O = L-glutamate + NH4(+). This is Glutaminase (glsA) from Corynebacterium glutamicum (strain ATCC 13032 / DSM 20300 / JCM 1318 / BCRC 11384 / CCUG 27702 / LMG 3730 / NBRC 12168 / NCIMB 10025 / NRRL B-2784 / 534).